A 451-amino-acid polypeptide reads, in one-letter code: Probable metal transport system membrane protein CT_069 (451 aa).

8 helical membrane passes run 14–34 (SFLA…ILLV), 38–58 (PLLS…GALL), 70–90 (WVII…ISFL), 100–120 (SALC…VSYV), 145–165 (TEAK…WWWY), 192–212 (VLVF…ILLI), 233–253 (ILIL…YFSV), and 269–289 (ILPT…LCLI). The segment at 432 to 451 (PDYDPHQREIPKRTRKSDGC) is disordered. Residues 434–451 (YDPHQREIPKRTRKSDGC) show a composition bias toward basic and acidic residues.

The protein belongs to the ABC-3 integral membrane protein family.

The protein resides in the cell inner membrane. In terms of biological role, part of an ATP-driven transport system CT_067/CT_068/CT_069/CT_070 for a metal. The chain is Probable metal transport system membrane protein CT_069 from Chlamydia trachomatis serovar D (strain ATCC VR-885 / DSM 19411 / UW-3/Cx).